The sequence spans 695 residues: UvrABC system protein C (695 aa).

The segment covering 1–10 (MNQDPAETRD) has biased composition (basic and acidic residues). The disordered stretch occupies residues 1 to 53 (MNQDPAETRDTAAPPPADTTSPSPVSPELEPRSAPGAQDIDAASASLTVDEDD). Residues 18–27 (DTTSPSPVSP) are compositionally biased toward low complexity. The GIY-YIG domain maps to 88-166 (TSPGVYRMLN…IKQLRPRFNV (79 aa)). The 36-residue stretch at 276-311 (RAVKQELAVEMEKASNELEFETAALYRDRLAALSAI) folds into the UVR domain.

This sequence belongs to the UvrC family. In terms of assembly, interacts with UvrB in an incision complex.

Its subcellular location is the cytoplasm. Functionally, the UvrABC repair system catalyzes the recognition and processing of DNA lesions. UvrC both incises the 5' and 3' sides of the lesion. The N-terminal half is responsible for the 3' incision and the C-terminal half is responsible for the 5' incision. The protein is UvrABC system protein C of Rhodopseudomonas palustris (strain BisB5).